The sequence spans 339 residues: Uroporphyrinogen decarboxylase (339 aa).

Residues 21–25 (RQAGR), aspartate 71, tyrosine 147, serine 202, and histidine 315 contribute to the substrate site.

It belongs to the uroporphyrinogen decarboxylase family. Homodimer.

The protein resides in the cytoplasm. The catalysed reaction is uroporphyrinogen III + 4 H(+) = coproporphyrinogen III + 4 CO2. It participates in porphyrin-containing compound metabolism; protoporphyrin-IX biosynthesis; coproporphyrinogen-III from 5-aminolevulinate: step 4/4. Functionally, catalyzes the decarboxylation of four acetate groups of uroporphyrinogen-III to yield coproporphyrinogen-III. This chain is Uroporphyrinogen decarboxylase, found in Helicobacter pylori (strain G27).